A 377-amino-acid chain; its full sequence is Stimulator of interferon genes protein (377 aa).

Residues 1–21 (MRRAEENNGFGTIPKRRNQHT) are Cytoplasmic-facing. Residues 22 to 42 (PFYASIGMIVVIIVAFTSYHI) traverse the membrane as a helical segment. The Extracellular segment spans residues 43 to 57 (TSYGDDRNRAMRQYS). A helical membrane pass occupies residues 58–80 (FTFSLAYLAFLVGELLRRCCLFA). Topologically, residues 81-101 (EEYRHIETRYNGSLKKAIQTT) are cytoplasmic. A helical membrane pass occupies residues 102–122 (FSFGHNNVLFVASLLFFVVFV). The Extracellular segment spans residues 123–154 (ASNDPNGSSSVIQGNSTAEPHTEMRQTSGWQG). The chain crosses the membrane as a helical span at residues 155-175 (LWGQFIISALLTPLVVHLLGL). The Cytoplasmic segment spans residues 176 to 377 (RELSKVEESQ…LKDSELEIGG (202 aa)). 2',3'-cGAMP is bound by residues Y206, R272, 278–279 (RH), and T303. Residues Y206, R272, R278, and 300-303 (EYAT) contribute to the 3',3'-c-di-GMP site.

This sequence belongs to the TMEM173 family. As to quaternary structure, homodimer.

Its subcellular location is the endoplasmic reticulum membrane. In terms of biological role, sensor of cytosolic DNA from bacteria and viruses that promotes autophagy. Acts by recognizing and binding cyclic GMP-AMP (cGAMP), a messenger produced by CGAS in response to DNA in the cytosol. Following cGAMP-binding, promotes the formation of autophagosomes, leading to target cytosolic DNA for degradation by the lysosome. Exhibits guanine base-specific ligand recognition. Binds 3'-3'linked cGAMP, 2'-3' linked cGAMP and 3'-3' linked c-di-GMP with much greater affinity as compared to 3'-3' linked c-di-AMP. Lacks the C-terminal tail (CTT) found in mammalian orthologs which is essential for interferon signaling. The polypeptide is Stimulator of interferon genes protein (Nematostella vectensis (Starlet sea anemone)).